A 221-amino-acid polypeptide reads, in one-letter code: NEDD4 family-interacting protein 1 (221 aa).

N-acetylalanine is present on A2. Residues 2–41 (ALALAALAAVEPACGSRYQQLQNEEESGEPEQAAGDAPPP) are interaction with UBE2L3. The Cytoplasmic portion of the chain corresponds to 2-116 (ALALAALAAV…ADQLRIGNDG (115 aa)). Positions 18 to 45 (RYQQLQNEEESGEPEQAAGDAPPPYSSI) are disordered. 3 consecutive short sequence motifs (PPxY motif) follow at residues 39-42 (PPPY), 64-67 (PPSY), and 74-76 (PSY). The segment at 42-76 (YSSISAESAAYFDYKDESGFPKPPSYNVATTLPSY) is interaction with ITCH. A helical membrane pass occupies residues 117–137 (IFMLTFFMAFLFNWIGFFLSF). The Extracellular portion of the chain corresponds to 138 to 143 (CLTTSA). Residues 144-164 (AGRYGAISGFGLSLIKWILIV) traverse the membrane as a helical segment. The Cytoplasmic segment spans residues 165–172 (RFSTYFPG). A helical transmembrane segment spans residues 173-193 (YFDGQYWLWWVFLVLGFLLFL). Residues 194–221 (RGFINYAKVRKMPETFSNLPRTRVLFIY) lie on the Extracellular side of the membrane.

In terms of assembly, forms heterodimers with NDFIP2. Interacts with several E3 ubiquitin-protein ligases, including ITCH, NEDD4, NEDD4L and WWP2. The interaction with NEDD4, NEDD4L and ITCH leads to relocalization of these proteins to exosomes and eventually to exosomal secretion. Interacts with U2SURP. Interacts with SLC11A2/DMT1. Interacts with PTEN. May interact with phosphorylated EGFR. Interacts with BRAT1. Interacts with KCNH2. Interacts with MAVS. Part of a complex containing ITCH, NDFIP1 and MAP3K7. Interacts (via N-terminus) with UBE2L3; the interaction mediates recruitment of UBE2L3 to ITCH. Post-translationally, ubiquitinated by NEDD4 and ITCH; mono-, di- and polyubiquitinated forms are detected. Ubiquitination regulates its degradation. In terms of processing, undergoes transient tyrosine phosphorylation following EGF stimulation, most probably by catalyzed by SRC. Phosphorylation SRC is enhanced in the presence of NDFIP2 which may act as a scaffold to recruit SRC to NDFIP1. Widely expressed. Higher levels are detected in cerebellum, pituitary, thalamus, kidney, liver, testis, salivary glands and placenta. Also expressed in fetal brain, kidney and lung.

Its subcellular location is the endosome membrane. The protein resides in the golgi apparatus membrane. It localises to the synapse. The protein localises to the synaptosome. It is found in the cell projection. Its subcellular location is the dendrite. The protein resides in the secreted. Activates HECT domain-containing E3 ubiquitin-protein ligases, including NEDD4 and ITCH, and consequently modulates the stability of their targets. As a result, controls many cellular processes. Prevents chronic T-helper cell-mediated inflammation by activating ITCH and thus controlling JUNB degradation. Promotes pancreatic beta cell death through degradation of JUNB and inhibition of the unfolded protein response, leading to reduction of insulin secretion. Restricts the production of pro-inflammatory cytokines in effector Th17 T-cells by promoting ITCH-mediated ubiquitination and degradation of RORC. Together with NDFIP2, limits the cytokine signaling and expansion of effector Th2 T-cells by promoting degradation of JAK1, probably by ITCH- and NEDD4L-mediated ubiquitination. Regulates peripheral T-cell tolerance to self and foreign antigens, forcing the exit of naive CD4+ T-cells from the cell cycle before they become effector T-cells. Negatively regulates RLR-mediated antiviral response by promoting SMURF1-mediated ubiquitination and subsequent degradation of MAVS. Negatively regulates KCNH2 potassium channel activity by decreasing its cell-surface expression and interfering with channel maturation through recruitment of NEDD4L to the Golgi apparatus where it mediates KCNH2 degradation. In cortical neurons, mediates the ubiquitination of the divalent metal transporter SLC11A2/DMT1 by NEDD4L, leading to its down-regulation and protection of the cells from cobalt and iron toxicity. Important for normal development of dendrites and dendritic spines in cortex. Enhances the ubiquitination of BRAT1 mediated by: NEDD4, NEDD4L and ITCH and is required for the nuclear localization of ubiquitinated BRAT1. Enhances the ITCH-mediated ubiquitination of MAP3K7 by recruiting E2 ubiquitin-conjugating enzyme UBE2L3 to ITCH. Modulates EGFR signaling through multiple pathways. In particular, may regulate the ratio of AKT1-to-MAPK8 signaling in response to EGF, acting on AKT1 probably through PTEN destabilization and on MAPK8 through ITCH-dependent MAP2K4 inactivation. As a result, may control cell growth rate. Inhibits cell proliferation by promoting PTEN nuclear localization and changing its signaling specificity. This chain is NEDD4 family-interacting protein 1 (NDFIP1), found in Homo sapiens (Human).